A 155-amino-acid chain; its full sequence is Small ribosomal subunit protein uS7c (155 aa).

It belongs to the universal ribosomal protein uS7 family. In terms of assembly, part of the 30S ribosomal subunit.

It localises to the plastid. The protein localises to the chloroplast. Its function is as follows. One of the primary rRNA binding proteins, it binds directly to 16S rRNA where it nucleates assembly of the head domain of the 30S subunit. This Saururus cernuus (Lizard's tail) protein is Small ribosomal subunit protein uS7c (rps7).